Reading from the N-terminus, the 546-residue chain is Probable protein kinase UbiB (546 aa).

A Protein kinase domain is found at 124-502; it reads DFEIKPLASA…HVRQGQSRYF (379 aa). ATP contacts are provided by residues 130 to 138 and Lys-153; that span reads LASASIAQV. The Proton acceptor role is filled by Asp-288. A run of 2 helical transmembrane segments spans residues 501 to 521 and 522 to 542; these read YFLGIGATLVLSGTFLLVSRP and EWGLMPGWLMAGGLIAWFVGW.

The protein belongs to the ABC1 family. UbiB subfamily.

The protein resides in the cell inner membrane. It participates in cofactor biosynthesis; ubiquinone biosynthesis [regulation]. In terms of biological role, is probably a protein kinase regulator of UbiI activity which is involved in aerobic coenzyme Q (ubiquinone) biosynthesis. The protein is Probable protein kinase UbiB of Shigella sonnei (strain Ss046).